Reading from the N-terminus, the 81-residue chain is NAD(P)H-quinone oxidoreductase subunit L (81 aa).

2 helical membrane passes run 13–33 and 51–71; these read LLVI…IPLF and LGIY…APFL.

Belongs to the complex I NdhL subunit family. NDH-1 can be composed of about 15 different subunits; different subcomplexes with different compositions have been identified which probably have different functions.

The protein localises to the cellular thylakoid membrane. The enzyme catalyses a plastoquinone + NADH + (n+1) H(+)(in) = a plastoquinol + NAD(+) + n H(+)(out). It carries out the reaction a plastoquinone + NADPH + (n+1) H(+)(in) = a plastoquinol + NADP(+) + n H(+)(out). Its function is as follows. NDH-1 shuttles electrons from an unknown electron donor, via FMN and iron-sulfur (Fe-S) centers, to quinones in the respiratory and/or the photosynthetic chain. The immediate electron acceptor for the enzyme in this species is believed to be plastoquinone. Couples the redox reaction to proton translocation, and thus conserves the redox energy in a proton gradient. Cyanobacterial NDH-1 also plays a role in inorganic carbon-concentration. The sequence is that of NAD(P)H-quinone oxidoreductase subunit L from Synechococcus sp. (strain WH7803).